The following is a 102-amino-acid chain: Putative defensin-like protein 152 (102 aa).

Residues 1-29 (MKKASQLSTTILTIFIVLAIGMMVKGTVG) form the signal peptide. Cystine bridges form between C34-C93, C51-C71, C56-C87, and C60-C89.

Belongs to the DEFL family.

It localises to the secreted. In Arabidopsis thaliana (Mouse-ear cress), this protein is Putative defensin-like protein 152 (LCR11).